Consider the following 58-residue polypeptide: Small ribosomal subunit protein bS21 (58 aa).

Belongs to the bacterial ribosomal protein bS21 family.

In Streptococcus pyogenes serotype M49 (strain NZ131), this protein is Small ribosomal subunit protein bS21.